Consider the following 568-residue polypeptide: MEKTVLLLATVSLVKSDQICIGYHANNSTEQVDTIMEKNVTVTHAQDILERTHNGKLCDLNGVKPLILRDCSVAGWLLGNPMCDEFINVPEWSYIVEKASPANDLCYPGNFNDYEELKHLLSRINHFEKIQIIPKSSWSNHDASSGVSSACPYLGRSSFFRNVVWLIKKNSAYPTIKRSYNNTNQEDLLVLWGIHHPNDAAEQTKLYQNPTTYISVGTSTLNQRLVPEIATRPKVNGQSGRMEFFWTILKPNDAINFESNGNFIAPEYAYKIVKKGDSTIMKSELEYGNCNTKCQTPMGAINSSMPFHNIHPLTIGECPKYVKSNRLVLATGLRNTPQRERRRKKRGLFGAIAGFIEGGWQGMVDGWYGYHHSNEQGSGYAADKESTQKAIDGVTNKVNSIINKMNTQFEAVGREFNNLERRIENLNKKMEDGFLDVWTYNAELLVLMENERTLDFHDSNVKNLYDKVRLQLRDNAKELGNGCFEFYHKCDNECMESVKNGTYDYPQYSEEARLNREEISGVKLESMGTYQILSIYSTVASSLALAIMVAGLSLWMCSNGSLQCRICI.

Residues 1-16 (MEKTVLLLATVSLVKS) form the signal peptide. Topologically, residues 17–531 (DQICIGYHAN…VKLESMGTYQ (515 aa)) are extracellular. Disulfide bonds link Cys-20/Cys-483, Cys-58/Cys-290, Cys-71/Cys-83, Cys-106/Cys-151, Cys-294/Cys-318, and Cys-490/Cys-494. N-linked (GlcNAc...) asparagine; by host glycosylation is found at Asn-26, Asn-27, and Asn-39. N-linked (GlcNAc...) asparagine; by host glycosylation is found at Asn-181 and Asn-302. An N-linked (GlcNAc...) asparagine; by host glycan is attached at Asn-500. The helical transmembrane segment at 532 to 552 (ILSIYSTVASSLALAIMVAGL) threads the bilayer. At 553 to 568 (SLWMCSNGSLQCRICI) the chain is on the cytoplasmic side. Residues Cys-557, Cys-564, and Cys-567 are each lipidated (S-palmitoyl cysteine; by host).

It belongs to the influenza viruses hemagglutinin family. As to quaternary structure, homotrimer of disulfide-linked HA1-HA2. Palmitoylated. In terms of processing, in natural infection, inactive HA is matured into HA1 and HA2 outside the cell by one or more trypsin-like, arginine-specific endoprotease secreted by the bronchial epithelial cells. One identified protease that may be involved in this process is secreted in lungs by club cells.

The protein localises to the virion membrane. The protein resides in the host apical cell membrane. Functionally, binds to sialic acid-containing receptors on the cell surface, bringing about the attachment of the virus particle to the cell. This attachment induces virion internalization of about two third of the virus particles through clathrin-dependent endocytosis and about one third through a clathrin- and caveolin-independent pathway. Plays a major role in the determination of host range restriction and virulence. Class I viral fusion protein. Responsible for penetration of the virus into the cell cytoplasm by mediating the fusion of the membrane of the endocytosed virus particle with the endosomal membrane. Low pH in endosomes induces an irreversible conformational change in HA2, releasing the fusion hydrophobic speptide. Several trimers are required to form a competent fusion pore. Binds to sialic acid-containing receptors on the cell surface, bringing about the attachment of the virus particle to the cell. This attachment induces virion internalization either through clathrin-dependent endocytosis or through clathrin- and caveolin-independent pathway. Plays a major role in the determination of host range restriction and virulence. Class I viral fusion protein. Responsible for penetration of the virus into the cell cytoplasm by mediating the fusion of the membrane of the endocytosed virus particle with the endosomal membrane. Low pH in endosomes induces an irreversible conformational change in HA2, releasing the fusion hydrophobic peptide. Several trimers are required to form a competent fusion pore. This chain is Hemagglutinin, found in Aves (Cat).